The following is a 376-amino-acid chain: Chaperone protein DnaJ (376 aa).

Residues 4 to 68 (DYYQLLGVAR…ETRARYDQFG (65 aa)) form the J domain. The segment at 135 to 217 (GGEKEIRVTH…CGGAGRLRRP (83 aa)) adopts a CR-type zinc-finger fold. Residues C148, C151, C165, C168, C191, C194, C205, and C208 each contribute to the Zn(2+) site. 4 CXXCXGXG motif repeats span residues 148–155 (CGTCQGSG), 165–172 (CTTCGGAG), 191–198 (CPTCEGSG), and 205–212 (CDDCGGAG).

It belongs to the DnaJ family. In terms of assembly, homodimer. The cofactor is Zn(2+).

Its subcellular location is the cytoplasm. Its function is as follows. Participates actively in the response to hyperosmotic and heat shock by preventing the aggregation of stress-denatured proteins and by disaggregating proteins, also in an autonomous, DnaK-independent fashion. Unfolded proteins bind initially to DnaJ; upon interaction with the DnaJ-bound protein, DnaK hydrolyzes its bound ATP, resulting in the formation of a stable complex. GrpE releases ADP from DnaK; ATP binding to DnaK triggers the release of the substrate protein, thus completing the reaction cycle. Several rounds of ATP-dependent interactions between DnaJ, DnaK and GrpE are required for fully efficient folding. Also involved, together with DnaK and GrpE, in the DNA replication of plasmids through activation of initiation proteins. This chain is Chaperone protein DnaJ, found in Synechococcus sp. (strain ATCC 27144 / PCC 6301 / SAUG 1402/1) (Anacystis nidulans).